The primary structure comprises 178 residues: Large ribosomal subunit protein uL6 (178 aa).

The protein belongs to the universal ribosomal protein uL6 family. Part of the 50S ribosomal subunit.

Its function is as follows. This protein binds to the 23S rRNA, and is important in its secondary structure. It is located near the subunit interface in the base of the L7/L12 stalk, and near the tRNA binding site of the peptidyltransferase center. The polypeptide is Large ribosomal subunit protein uL6 (Staphylococcus carnosus (strain TM300)).